The primary structure comprises 55 residues: MASSTDVRPKITLACEVCKHRNYITKKNRRNDPDRLELKKFCPNCGKHQAHRETR.

This sequence belongs to the bacterial ribosomal protein bL33 family.

This chain is Large ribosomal subunit protein bL33B (rpmG2), found in Mycobacterium tuberculosis (strain CDC 1551 / Oshkosh).